Here is a 290-residue protein sequence, read N- to C-terminus: MLKNVHQKARHHTRPVRAWLKLLWQRIDEDNMTTLAGNLAYVSLLSLVPLIAVVFALFAAFPMFSDVSLQLRHFIFANFIPATGDVIQRYIEQFVANSNKMTAVGACGLIVTALLLMYAIDSALNTIWRSKRTRPKVYSFAVYWMILTLGPLLAGASLAISSYLLSLRWASELNTVIDNVLRVFPLILSWISFWLLYSIVPTTRVPNRDAVVGAFVAAVLFEAGKKGFALYITMFPSYQLIYGVLAVIPILFVWVYWTWCIVLLGAEITVTLGEYRKLKQAAEQEEADQS.

6 helical membrane-spanning segments follow: residues 44 to 64, 104 to 124, 140 to 160, 183 to 203, 210 to 230, and 244 to 264; these read LLSL…FPMF, VGAC…DSAL, FAVY…SLAI, VFPL…VPTT, AVVG…GFAL, and VLAV…IVLL.

Belongs to the UPF0761 family.

It localises to the cell inner membrane. The polypeptide is UPF0761 membrane protein CKO_03126 (Citrobacter koseri (strain ATCC BAA-895 / CDC 4225-83 / SGSC4696)).